The sequence spans 158 residues: Urease accessory protein UreE (158 aa).

The tract at residues 133–158 (PEGGAYQAHSHDGHSHHQGHTHDHHD) is disordered. Residues 141–158 (HSHDGHSHHQGHTHDHHD) are compositionally biased toward basic and acidic residues.

It belongs to the UreE family.

Its subcellular location is the cytoplasm. In terms of biological role, involved in urease metallocenter assembly. Binds nickel. Probably functions as a nickel donor during metallocenter assembly. In Chelativorans sp. (strain BNC1), this protein is Urease accessory protein UreE.